Reading from the N-terminus, the 37-residue chain is Large ribosomal subunit protein bL36A (37 aa).

This sequence belongs to the bacterial ribosomal protein bL36 family.

This Actinobacillus pleuropneumoniae serotype 3 (strain JL03) protein is Large ribosomal subunit protein bL36A.